The following is an 87-amino-acid chain: Precursor of CEP8 (87 aa).

Residues methionine 1–alanine 29 form the signal peptide. The propeptide occupies arginine 30–aspartate 72. The N-linked (GlcNAc...) asparagine glycan is linked to asparagine 41. Residues asparagine 41–histidine 87 form a disordered region. Residues glycine 49–serine 59 are compositionally biased toward gly residues. Over residues aspartate 63 to arginine 75 the composition is skewed to basic and acidic residues. 3 positions are modified to hydroxyproline: proline 76, proline 79, and proline 83.

It belongs to the C-terminally encoded plant signaling peptide (CEP) family. As to quaternary structure, interacts with CEP receptors (e.g. CEPR1 and CEPR2). In terms of processing, the mature small signaling peptide is generated by proteolytic processing of the longer precursor. Expressed in lateral root primordia and in lateral roots excluding the meristem region. Also present in the aerial tissues, such as leaf petioles and the shoot apex region.

It is found in the secreted. The protein localises to the extracellular space. The protein resides in the apoplast. Its function is as follows. Extracellular signaling peptide that may regulate primary root growth rate and systemic nitrogen (N)-demand signaling. Mediates up-regulation of genes involved in N uptake and assimilation pathways. The protein is Precursor of CEP8 of Arabidopsis thaliana (Mouse-ear cress).